A 995-amino-acid polypeptide reads, in one-letter code: Putative pentatricopeptide repeat-containing protein At5g09950 (995 aa).

PPR repeat units lie at residues 35–65, 66–100, 101–137, 138–169, 170–204, 205–241, 242–276, 278–303, 307–342, 348–378, 379–413, 414–448, 449–483, 484–515, 516–550, 551–581, 583–617, 618–652, 653–683, 684–718, 720–750, and 756–786; these read DVYL…MPLR, NCVS…GIFS, NQYA…SYAV, DAVV…IEVK, NSVS…GSRP, TEYT…GLLT, DLFV…NAVT, NGLM…MNSM, SPES…VITT, MVGI…MTDK, DSVS…DILP, GSFT…GIDL, NVSV…DQVS, WNSI…GQKL, NRIT…NIAD, EATT…MAER, DNVT…GQRL, DSFM…CLES, DVVV…MPVR, NSYS…GQTP, DHVT…MSDS, and RIEH…MPMK. The segment at 791-868 is type E motif; sequence IWRTVLGACC…EAGYSWVTMK (78 aa). Residues 869–899 are type E(+) motif; it reads DGVHMFVAGDKSHPDADVIYKKLKELNRKMR. Positions 900 to 995 are type DYW motif; the sequence is DAGYVPQTGF…DGACSCSDFW (96 aa).

Belongs to the PPR family. PCMP-H subfamily.

The chain is Putative pentatricopeptide repeat-containing protein At5g09950 (PCMP-H35) from Arabidopsis thaliana (Mouse-ear cress).